The following is a 281-amino-acid chain: Nucleotide-binding protein Noc_2797 (281 aa).

8–15 (GVSGSGKS) provides a ligand contact to ATP. Position 58–61 (58–61 (DARN)) interacts with GTP.

It belongs to the RapZ-like family.

Displays ATPase and GTPase activities. The sequence is that of Nucleotide-binding protein Noc_2797 from Nitrosococcus oceani (strain ATCC 19707 / BCRC 17464 / JCM 30415 / NCIMB 11848 / C-107).